A 147-amino-acid chain; its full sequence is D-aminoacyl-tRNA deacylase (147 aa).

The short motif at 136–137 is the Gly-cisPro motif, important for rejection of L-amino acids element; the sequence is GP.

The protein belongs to the DTD family. In terms of assembly, homodimer.

The protein localises to the cytoplasm. The catalysed reaction is glycyl-tRNA(Ala) + H2O = tRNA(Ala) + glycine + H(+). It carries out the reaction a D-aminoacyl-tRNA + H2O = a tRNA + a D-alpha-amino acid + H(+). Functionally, an aminoacyl-tRNA editing enzyme that deacylates mischarged D-aminoacyl-tRNAs. Also deacylates mischarged glycyl-tRNA(Ala), protecting cells against glycine mischarging by AlaRS. Acts via tRNA-based rather than protein-based catalysis; rejects L-amino acids rather than detecting D-amino acids in the active site. By recycling D-aminoacyl-tRNA to D-amino acids and free tRNA molecules, this enzyme counteracts the toxicity associated with the formation of D-aminoacyl-tRNA entities in vivo and helps enforce protein L-homochirality. This chain is D-aminoacyl-tRNA deacylase, found in Streptococcus agalactiae serotype III (strain NEM316).